The chain runs to 304 residues: Voltage-dependent anion channel-forming protein YneE (304 aa).

The next 4 helical transmembrane spans lie at 28-48, 50-70, 209-229, and 235-255; these read LLLNFLLSIAVIIMLPWYTML, IKFTLAPFSILGVAIAIFLGF, AYTLILHRTVYLFCIMLPFAL, and YMTPFISVLISYTFIALDALA.

It belongs to the anion channel-forming bestrophin (TC 1.A.46) family.

Its subcellular location is the cell membrane. In Salmonella typhi, this protein is Voltage-dependent anion channel-forming protein YneE (yneE).